Here is a 281-residue protein sequence, read N- to C-terminus: 2-dehydro-3-deoxyphosphooctonate aldolase (281 aa).

The protein belongs to the KdsA family.

It localises to the cytoplasm. The enzyme catalyses D-arabinose 5-phosphate + phosphoenolpyruvate + H2O = 3-deoxy-alpha-D-manno-2-octulosonate-8-phosphate + phosphate. It participates in carbohydrate biosynthesis; 3-deoxy-D-manno-octulosonate biosynthesis; 3-deoxy-D-manno-octulosonate from D-ribulose 5-phosphate: step 2/3. Its pathway is bacterial outer membrane biogenesis; lipopolysaccharide biosynthesis. This is 2-dehydro-3-deoxyphosphooctonate aldolase from Pseudomonas entomophila (strain L48).